The chain runs to 127 residues: Large ribosomal subunit protein bL17 (127 aa).

Belongs to the bacterial ribosomal protein bL17 family. As to quaternary structure, part of the 50S ribosomal subunit. Contacts protein L32.

The chain is Large ribosomal subunit protein bL17 from Haemophilus ducreyi (strain 35000HP / ATCC 700724).